The following is a 125-amino-acid chain: Fumarate reductase subunit D (125 aa).

Helical transmembrane passes span 30-50 (FAMITPITVLVLGILVPLGVI), 63-83 (FATSIIGALFIIGTLALPMWH), and 105-125 (IACYAFAGLISALAVVFIFMI).

It belongs to the FrdD family. As to quaternary structure, part of an enzyme complex containing four subunits: a flavoprotein (FrdA), an iron-sulfur protein (FrdB), and two hydrophobic anchor proteins (FrdC and FrdD).

The protein localises to the cell inner membrane. Its function is as follows. Anchors the catalytic components of the fumarate reductase complex to the cell membrane, binds quinones. In Vibrio campbellii (strain ATCC BAA-1116), this protein is Fumarate reductase subunit D.